The chain runs to 270 residues: 4-hydroxy-tetrahydrodipicolinate reductase (270 aa).

Residues 11-16 (GAGGRM) and Glu37 each bind NAD(+). Arg38 contributes to the NADP(+) binding site. NAD(+) is bound by residues 101–103 (GTT) and 125–128 (APNM). His158 acts as the Proton donor/acceptor in catalysis. His159 provides a ligand contact to (S)-2,3,4,5-tetrahydrodipicolinate. Lys162 acts as the Proton donor in catalysis. 168-169 (GT) contributes to the (S)-2,3,4,5-tetrahydrodipicolinate binding site.

This sequence belongs to the DapB family.

It localises to the cytoplasm. It carries out the reaction (S)-2,3,4,5-tetrahydrodipicolinate + NAD(+) + H2O = (2S,4S)-4-hydroxy-2,3,4,5-tetrahydrodipicolinate + NADH + H(+). The catalysed reaction is (S)-2,3,4,5-tetrahydrodipicolinate + NADP(+) + H2O = (2S,4S)-4-hydroxy-2,3,4,5-tetrahydrodipicolinate + NADPH + H(+). The protein operates within amino-acid biosynthesis; L-lysine biosynthesis via DAP pathway; (S)-tetrahydrodipicolinate from L-aspartate: step 4/4. Catalyzes the conversion of 4-hydroxy-tetrahydrodipicolinate (HTPA) to tetrahydrodipicolinate. This chain is 4-hydroxy-tetrahydrodipicolinate reductase, found in Shewanella sp. (strain ANA-3).